The chain runs to 217 residues: Small ribosomal subunit protein uS3 (217 aa).

In terms of domain architecture, KH type-2 spans 38 to 106 (IRKFIDNELK…KVHINVIEIK (69 aa)).

This sequence belongs to the universal ribosomal protein uS3 family. In terms of assembly, part of the 30S ribosomal subunit. Forms a tight complex with proteins S10 and S14.

In terms of biological role, binds the lower part of the 30S subunit head. Binds mRNA in the 70S ribosome, positioning it for translation. This chain is Small ribosomal subunit protein uS3, found in Staphylococcus epidermidis (strain ATCC 35984 / DSM 28319 / BCRC 17069 / CCUG 31568 / BM 3577 / RP62A).